A 1180-amino-acid chain; its full sequence is MTLQGRADLSGNQGNAAGRLATVHEPVVTQWAVHPPAPAHPSLLDKMEKAPPQPQHEGLKSKEHLPQQPAEGKTASRRVPRLRAVVESQAFKNILVDEMDMMHARAATLIQANWRGYWLRQKLISQMMAAKAIQEAWRRFNKRHILHSSKSLVKKTRAEEGDIPYHAPQQVRFQHPEENRLLSPPIMVNKETQFPSCDNLVLCRPQSSPLLQPPAAQGTPEPCVQGPHAARVRGLAFLPHQTVTIRFPCPVSLDAKCQPCLLTRTIRSTCLVHIEGDSVKTKRVSARTNKARAPETPLSRRYDQAVTRPSRAQTQGPVKAETPKAPFQICPGPMITKTLLQTYPVVSVTLPQTYPASTMTTTPPKTSPVPKVTIIKTPAQMYPGPTVTKTAPHTCPMPTMTKIQVHPTASRTGTPRQTCPATITAKNRPQVSLLASIMKSLPQVCPGPAMAKTPPQMHPVTTPAKNPLQTCLSATMSKTSSQRSPVGVTKPSPQTRLPAMITKTPAQLRSVATILKTLCLASPTVANVKAPPQVAVAAGTPNTSGSIHENPPKAKATVNVKQAAKVVKASSPSYLAEGKIRCLAQPHPGTGVPRAAAELPLEAEKIKTGTQKQAKTDMAFKTSVAVEMAGAPSWTKVAEEGDKPPHVYVPVDMAVTLPRGQLAAPLTNASSQRHPPCLSQRPLAAPLTKASSQGHLPTELTKTPSLAHLDTCLSKMHSQTHLATGAVKVQSQAPLATCLTKTQSRGQPITDITTCLIPAHQAADLSSNTHSQVLLTGSKVSNHACQRLGGLSAPPWAKPEDRQTQPQPHGHVPGKTTQGGPCPAACEVQGMLVPPMAPTGHSTCNVESWGDNGATRAQPSMPGQAVPCQEDTGPADAGVVGGQSWNRAWEPARGAASWDTWRNKAVVPPRRSGEPMVSMQAAEEIRILAVITIQAGVRGYLARRRIRLWHRGAMVIQATWRGYRVRRNLAHLCRATTTIQSAWRGYSTRRDQARHWQMLHPVTWVELGSRAGVMSDRSWFQDGRARTVSDHRCFQSCQAHACSVCHSLSSRIGSPPSVVMLVGSSPRTCHTCGRTQPTRVVQGMGQGTEGPGAVSWASAYQLAALSPRQPHRQDKAATAIQSAWRGFKIRQQMRQQQMAAKIVQATWRGHHTRSCLKNTEALLGPADPSASSRHMHWPGI.

Residues 34–78 (HPPAPAHPSLLDKMEKAPPQPQHEGLKSKEHLPQQPAEGKTASRR) form a disordered region. One can recognise an IQ 1 domain in the interval 103 to 132 (HARAATLIQANWRGYWLRQKLISQMMAAKA). Disordered stretches follow at residues 283-324 (RVSA…ETPK), 476-496 (MSKT…PQTR), and 786-820 (QRLG…TQGG). 5 consecutive IQ domains span residues 926–955 (RILA…GAMV), 956–978 (IQAT…ATTT), 979–1001 (IQSA…MLHP), 1113–1142 (QDKA…AAKI), and 1143–1165 (VQAT…LLGP).

In terms of assembly, interacts with calmodulin.

In terms of biological role, essential for spermiogenesis and fertilization. May be required for manchette assembly in elongating spermatids. This is IQ domain-containing protein N from Homo sapiens (Human).